The sequence spans 440 residues: D-serine dehydratase (440 aa).

At lysine 116 the chain carries N6-(pyridoxal phosphate)lysine.

This sequence belongs to the serine/threonine dehydratase family. DsdA subfamily. In terms of assembly, monomer. The cofactor is pyridoxal 5'-phosphate.

The enzyme catalyses D-serine = pyruvate + NH4(+). This chain is D-serine dehydratase, found in Salmonella paratyphi A (strain ATCC 9150 / SARB42).